The chain runs to 483 residues: UDP-N-acetylmuramate--L-alanine ligase (483 aa).

Position 122–128 (122–128 (GSHGKTT)) interacts with ATP.

This sequence belongs to the MurCDEF family.

The protein resides in the cytoplasm. The catalysed reaction is UDP-N-acetyl-alpha-D-muramate + L-alanine + ATP = UDP-N-acetyl-alpha-D-muramoyl-L-alanine + ADP + phosphate + H(+). The protein operates within cell wall biogenesis; peptidoglycan biosynthesis. Functionally, cell wall formation. The sequence is that of UDP-N-acetylmuramate--L-alanine ligase from Synechococcus sp. (strain CC9311).